The following is a 404-amino-acid chain: Phosphopentomutase (404 aa).

Positions 10, 303, 308, 344, 345, and 356 each coordinate Mn(2+).

It belongs to the phosphopentomutase family. Mn(2+) is required as a cofactor.

The protein localises to the cytoplasm. The catalysed reaction is 2-deoxy-alpha-D-ribose 1-phosphate = 2-deoxy-D-ribose 5-phosphate. It catalyses the reaction alpha-D-ribose 1-phosphate = D-ribose 5-phosphate. It participates in carbohydrate degradation; 2-deoxy-D-ribose 1-phosphate degradation; D-glyceraldehyde 3-phosphate and acetaldehyde from 2-deoxy-alpha-D-ribose 1-phosphate: step 1/2. In terms of biological role, isomerase that catalyzes the conversion of deoxy-ribose 1-phosphate (dRib-1-P) and ribose 1-phosphate (Rib-1-P) to deoxy-ribose 5-phosphate (dRib-5-P) and ribose 5-phosphate (Rib-5-P), respectively. The polypeptide is Phosphopentomutase (Shewanella baltica (strain OS185)).